A 207-amino-acid chain; its full sequence is Large ribosomal subunit protein uL4 (207 aa).

The disordered stretch occupies residues 50-75 (KTKTVSEVSGTTKKPFKQKGTGNARQ).

The protein belongs to the universal ribosomal protein uL4 family. As to quaternary structure, part of the 50S ribosomal subunit.

In terms of biological role, one of the primary rRNA binding proteins, this protein initially binds near the 5'-end of the 23S rRNA. It is important during the early stages of 50S assembly. It makes multiple contacts with different domains of the 23S rRNA in the assembled 50S subunit and ribosome. Forms part of the polypeptide exit tunnel. The chain is Large ribosomal subunit protein uL4 from Rickettsia felis (strain ATCC VR-1525 / URRWXCal2) (Rickettsia azadi).